Here is a 430-residue protein sequence, read N- to C-terminus: Zinc carboxypeptidase A 1 (430 aa).

Positions 1 to 22 (MSLNKCLLFALLAIVASASVSA) are cleaved as a signal peptide. The Peptidase M14 domain maps to 124–423 (QYYELDDTYA…DSIVAMATEV (300 aa)). Positions 187 and 190 each coordinate Zn(2+). A disulfide bridge connects residues Cys-252 and Cys-275. Position 311 (His-311) interacts with Zn(2+). Catalysis depends on Glu-386, which acts as the Proton donor/acceptor.

It belongs to the peptidase M14 family. Zn(2+) is required as a cofactor.

Its subcellular location is the secreted. In Drosophila melanogaster (Fruit fly), this protein is Zinc carboxypeptidase A 1.